The following is a 423-amino-acid chain: Keratin, type I cytoskeletal 18 (423 aa).

At S2 the chain carries N-acetylserine. Positions 2–71 (SFTTRSTTFS…GLAGMGGIQT (70 aa)) are head. 4 positions are modified to phosphoserine: S7, S11, S16, and S19. Phosphoserine; alternate occurs at positions 31 and 32. O-linked (GlcNAc) serine; alternate glycosylation is found at S31 and S32. The residue at position 35 (S35) is a Phosphoserine. Phosphotyrosine is present on Y37. Phosphoserine is present on S43. At R46 the chain carries Omega-N-methylarginine. The residue at position 50 (S50) is a Phosphoserine; alternate. Residue S50 is glycosylated (O-linked (GlcNAc) serine; alternate). S52 is subject to Phosphoserine; by MAPKAPK2 and MAPKAPK3. Phosphoserine is present on residues S57 and S60. The tract at residues 62–366 (GLAGMGGIQT…EALLNIKVKL (305 aa)) is necessary for interaction with PNN. The segment at 69-121 (IQTEKETMQDLNDRLASYLDKVKSLETENRRLESKIREHLEKKGPQGVRDWGH) is interaction with TRADD. The interval 72 to 107 (EKETMQDLNDRLASYLDKVKSLETENRRLESKIREH) is coil 1A. The IF rod domain maps to 72–384 (EKETMQDLND…RLLEDGEDFS (313 aa)). K73 is covalently cross-linked (Glycyl lysine isopeptide (Lys-Gly) (interchain with G-Cter in SUMO2)). Residues S85 and S92 each carry the phosphoserine modification. The linker 1 stretch occupies residues 108-125 (LEKKGPQGVRDWGHYFKI). Residue K124 is modified to N6-acetyllysine. Residues 126 to 217 (IEDLRAQIFA…KNHEEEVQGL (92 aa)) are coil 1B. 2 positions are modified to phosphoserine: S137 and S170. The tract at residues 218-241 (EAQIASSGLTVEVDAPKSQDLSKI) is linker 12. Residues 236 to 384 (QDLSKIMADI…RLLEDGEDFS (149 aa)) are interaction with DNAJB6. K240 participates in a covalent cross-link: Glycyl lysine isopeptide (Lys-Gly) (interchain with G-Cter in SUMO2). Residues 242–380 (MADIRAQYEA…ATYRRLLEDG (139 aa)) are coil 2. T295 carries the post-translational modification Phosphothreonine. A Phosphoserine modification is found at S316. Residues K363 and K365 each participate in a glycyl lysine isopeptide (Lys-Gly) (interchain with G-Cter in SUMO2) cross-link. The tail stretch occupies residues 381–423 (EDFSLNDALDSSNSMQTVQKTTTRKIVDGRVVSETNDTRVLRH). Phosphoserine is present on residues S384, S391, S392, and S394. A Phosphothreonine modification is found at T397.

The protein belongs to the intermediate filament family. Heterotetramer of two type I and two type II keratins. KRT18 associates with KRT8. Interacts with PLEC isoform 1C, when in a heterodimer with KRT8. Interacts with PNN and mutated CFTR. Interacts with YWHAE, YWHAH and YWHAZ only when phosphorylated. Interacts with the thrombin-antithrombin complex. Interacts with DNAJB6, TCHP and TRADD. Interacts with FAM83H. Interacts with EPPK1. Interacts with PKP1 and PKP2. Post-translationally, phosphorylation increases by IL-6. In terms of processing, proteolytically cleaved by caspases during epithelial cell apoptosis. Cleavage occurs at Asp-231 by either caspase-3, caspas-6 or caspase-7. O-GlcNAcylation increases solubility, and decreases stability by inducing proteasomal degradation. Expressed in endoderm, intestinal epithelial cells and in most extraembryonic tissues.

Its subcellular location is the nucleus matrix. The protein resides in the cytoplasm. It is found in the perinuclear region. It localises to the nucleus. The protein localises to the nucleolus. In terms of biological role, when phosphorylated, plays a role in filament reorganization. Involved in the delivery of mutated CFTR to the plasma membrane. Involved in the uptake of thrombin-antithrombin complexes by hepatic cells. Together with KRT8, is involved in interleukin-6 (IL-6)-mediated barrier protection. This Mus musculus (Mouse) protein is Keratin, type I cytoskeletal 18 (Krt18).